We begin with the raw amino-acid sequence, 180 residues long: MANRLKEKYTNEVIPALTEKFNYSSVMAVPKVDKIVINMGVGEAVNNAKTLEKAAAELALISGQKPLITKAKKSIAGFRLREGVAIGAKVTLRGERMYEFLDKLVSVSLPRVRDFHGVPTKSFDGRGNYTLGVKEQLIFPEINFDDVDKVRGMDIVIVTTANTDEEGRELLKGLGMPFAK.

The protein belongs to the universal ribosomal protein uL5 family. Part of the 50S ribosomal subunit; part of the 5S rRNA/L5/L18/L25 subcomplex. Contacts the 5S rRNA and the P site tRNA. Forms a bridge to the 30S subunit in the 70S ribosome.

Its function is as follows. This is one of the proteins that bind and probably mediate the attachment of the 5S RNA into the large ribosomal subunit, where it forms part of the central protuberance. In the 70S ribosome it contacts protein S13 of the 30S subunit (bridge B1b), connecting the 2 subunits; this bridge is implicated in subunit movement. Contacts the P site tRNA; the 5S rRNA and some of its associated proteins might help stabilize positioning of ribosome-bound tRNAs. The protein is Large ribosomal subunit protein uL5 of Streptococcus thermophilus (strain ATCC BAA-491 / LMD-9).